Consider the following 168-residue polypeptide: Thiol peroxidase (168 aa).

The 149-residue stretch at Pro-20–Ala-168 folds into the Thioredoxin domain. The Cysteine sulfenic acid (-SOH) intermediate role is filled by Cys-62. Cysteines 62 and 96 form a disulfide.

It belongs to the peroxiredoxin family. Tpx subfamily. As to quaternary structure, homodimer.

The catalysed reaction is a hydroperoxide + [thioredoxin]-dithiol = an alcohol + [thioredoxin]-disulfide + H2O. Its function is as follows. Thiol-specific peroxidase that catalyzes the reduction of hydrogen peroxide and organic hydroperoxides to water and alcohols, respectively. Plays a role in cell protection against oxidative stress by detoxifying peroxides. This chain is Thiol peroxidase, found in Chlorobaculum tepidum (strain ATCC 49652 / DSM 12025 / NBRC 103806 / TLS) (Chlorobium tepidum).